Here is a 271-residue protein sequence, read N- to C-terminus: Formamidopyrimidine-DNA glycosylase (271 aa).

The active-site Schiff-base intermediate with DNA is P2. Catalysis depends on E3, which acts as the Proton donor. The active-site Proton donor; for beta-elimination activity is K57. H90, R109, and K150 together coordinate DNA. The FPG-type zinc finger occupies 235 to 269 (LVYGNKDKPCPKCGGKIESLIIGQRNSFFCPKCQK). R259 functions as the Proton donor; for delta-elimination activity in the catalytic mechanism.

This sequence belongs to the FPG family. In terms of assembly, monomer. Requires Zn(2+) as cofactor.

The enzyme catalyses Hydrolysis of DNA containing ring-opened 7-methylguanine residues, releasing 2,6-diamino-4-hydroxy-5-(N-methyl)formamidopyrimidine.. It carries out the reaction 2'-deoxyribonucleotide-(2'-deoxyribose 5'-phosphate)-2'-deoxyribonucleotide-DNA = a 3'-end 2'-deoxyribonucleotide-(2,3-dehydro-2,3-deoxyribose 5'-phosphate)-DNA + a 5'-end 5'-phospho-2'-deoxyribonucleoside-DNA + H(+). Functionally, involved in base excision repair of DNA damaged by oxidation or by mutagenic agents. Acts as a DNA glycosylase that recognizes and removes damaged bases. Has a preference for oxidized purines, such as 7,8-dihydro-8-oxoguanine (8-oxoG). Has AP (apurinic/apyrimidinic) lyase activity and introduces nicks in the DNA strand. Cleaves the DNA backbone by beta-delta elimination to generate a single-strand break at the site of the removed base with both 3'- and 5'-phosphates. This chain is Formamidopyrimidine-DNA glycosylase, found in Haemophilus influenzae (strain PittEE).